Here is a 178-residue protein sequence, read N- to C-terminus: Large ribosomal subunit protein eL20x (178 aa).

This sequence belongs to the eukaryotic ribosomal protein eL20 family.

The protein is Large ribosomal subunit protein eL20x (RPL18AC) of Arabidopsis thaliana (Mouse-ear cress).